A 280-amino-acid chain; its full sequence is UPF0276 protein CC_2906 (280 aa).

It belongs to the UPF0276 family.

The polypeptide is UPF0276 protein CC_2906 (Caulobacter vibrioides (strain ATCC 19089 / CIP 103742 / CB 15) (Caulobacter crescentus)).